We begin with the raw amino-acid sequence, 165 residues long: V-type proton ATPase 16 kDa proteolipid subunit (165 aa).

Over Met-1 to Thr-10 the chain is Lumenal. The chain crosses the membrane as a helical span at residues Ala-11 to Gly-33. Topologically, residues Thr-34–Ser-55 are cytoplasmic. A helical transmembrane segment spans residues Ile-56 to Ile-76. Topologically, residues Ser-77–His-95 are lumenal. Residues Leu-96 to Gly-117 form a helical membrane-spanning segment. The Cytoplasmic segment spans residues Asp-118–Lys-129. The chain crosses the membrane as a helical span at residues Leu-130–Leu-155. Residues Ser-156–Glu-165 are Lumenal-facing.

This sequence belongs to the V-ATPase proteolipid subunit family. In terms of assembly, V-ATPase is a heteromultimeric enzyme composed of a peripheral catalytic V1 complex (main components: subunits A, B, C, D, E, and F) attached to an integral membrane V0 proton pore complex (main component: the proteolipid protein; which is present as a hexamer that forms the proton-conducting pore).

Its subcellular location is the vacuole membrane. Proton-conducting pore forming subunit of the membrane integral V0 complex of vacuolar ATPase. V-ATPase is responsible for acidifying a variety of intracellular compartments in eukaryotic cells. The protein is V-type proton ATPase 16 kDa proteolipid subunit (CVA16-2) of Gossypium hirsutum (Upland cotton).